Consider the following 99-residue polypeptide: MICOS complex subunit MIC10 (99 aa).

Transmembrane regions (helical) follow at residues 27–43 (RFVY…LLFF) and 50–66 (WASI…SAYT).

This sequence belongs to the MICOS complex subunit Mic10 family. Component of the mitochondrial contact site and cristae organizing system (MICOS) complex. The MICOS complex associates with mitochondrial outer membrane proteins. Present in a large lipid-enriched complex called mitochondrial transmembrane lipoprotein (MTL) complex made of proteins located in the two mitochondrial membranes, including the TOM complex and the core components of the MICOS complex and containing at least digalactosyldiacylglycerol (DGDG).

It localises to the mitochondrion inner membrane. In terms of biological role, component of the MICOS complex, a large protein complex of the mitochondrial inner membrane that plays crucial roles in the maintenance of crista junctions, inner membrane architecture, and formation of contact sites to the outer membrane. The protein is MICOS complex subunit MIC10 of Arabidopsis thaliana (Mouse-ear cress).